Reading from the N-terminus, the 140-residue chain is C-type lectin 6 (140 aa).

A signal peptide spans 1 to 23 (MGRLVFVSFGLLVVFLSLSGTGA). 3 disulfide bridges follow: C25–C36, C53–C138, and C115–C130. Residues 32–139 (YEGHCYRVFQ…CSKTHNVICK (108 aa)) form the C-type lectin domain.

Belongs to the snaclec family. Heteromultimer; disulfide-linked. As to expression, expressed by the venom gland.

Its subcellular location is the secreted. Interferes with one step of hemostasis (modulation of platelet aggregation, or coagulation cascade, for example). This chain is C-type lectin 6, found in Crotalus adamanteus (Eastern diamondback rattlesnake).